A 32-amino-acid polypeptide reads, in one-letter code: Acatoxin 1 (32 aa).

3 disulfide bridges follow: cysteine 1-cysteine 15, cysteine 8-cysteine 20, and cysteine 14-cysteine 26.

It is found in the secreted. It localises to the nematocyst. Reversibly inhibits acid-sensing ion channels (ASIC) in rat dorsal root ganglia neurons. Reversibly inhibits voltage-gated potassium channels (Kv) in rat DRG neurons. This Anthopleura cascaia (Sea anemone) protein is Acatoxin 1.